Here is a 282-residue protein sequence, read N- to C-terminus: Orotidine 5'-phosphate decarboxylase (282 aa).

Lys-95 (proton donor) is an active-site residue.

This sequence belongs to the OMP decarboxylase family. Type 2 subfamily.

It carries out the reaction orotidine 5'-phosphate + H(+) = UMP + CO2. Its pathway is pyrimidine metabolism; UMP biosynthesis via de novo pathway; UMP from orotate: step 2/2. This is Orotidine 5'-phosphate decarboxylase from Polaromonas naphthalenivorans (strain CJ2).